A 468-amino-acid polypeptide reads, in one-letter code: 6-phosphogluconate dehydrogenase, decarboxylating (468 aa).

NADP(+) contacts are provided by residues 9-14 (GLAVMG), 32-34 (NRS), 73-75 (VKA), and Asn101. Residues Asn101 and 127-129 (SGG) contribute to the substrate site. The active-site Proton acceptor is the Lys182. A substrate-binding site is contributed by 185–186 (HN). Glu189 functions as the Proton donor in the catalytic mechanism. Positions 190, 259, 286, 444, and 450 each coordinate substrate.

Belongs to the 6-phosphogluconate dehydrogenase family. In terms of assembly, homodimer.

It catalyses the reaction 6-phospho-D-gluconate + NADP(+) = D-ribulose 5-phosphate + CO2 + NADPH. It participates in carbohydrate degradation; pentose phosphate pathway; D-ribulose 5-phosphate from D-glucose 6-phosphate (oxidative stage): step 3/3. Functionally, catalyzes the oxidative decarboxylation of 6-phosphogluconate to ribulose 5-phosphate and CO(2), with concomitant reduction of NADP to NADPH. In Staphylococcus epidermidis (strain ATCC 35984 / DSM 28319 / BCRC 17069 / CCUG 31568 / BM 3577 / RP62A), this protein is 6-phosphogluconate dehydrogenase, decarboxylating (gnd).